The following is a 353-amino-acid chain: 2-oxoglutarate-Fe(II) type oxidoreductase ppzD (353 aa).

The Fe2OG dioxygenase domain occupies 181 to 292; that stretch reads NTSELRLNHY…RYSVAYFGKP (112 aa). Residues H208, D210, and H268 each contribute to the Fe cation site. R283 is a 2-oxoglutarate binding site.

Belongs to the iron/ascorbate-dependent oxidoreductase family. Requires Fe(2+) as cofactor.

It catalyses the reaction L-proline + 2-oxoglutarate + O2 = trans-4-hydroxy-L-proline + succinate + CO2. The enzyme catalyses L-proline + 2-oxoglutarate + O2 = trans-3-hydroxy-L-proline + succinate + CO2. The catalysed reaction is D-proline + 2-oxoglutarate + O2 = cis-4-hydroxy-D-proline + succinate + CO2. It participates in secondary metabolite biosynthesis. Its function is as follows. 2-oxoglutarate-Fe(II) type oxidoreductase; part of the gene cluster that mediates the biosynthesis of pyrrolopyrazines, secondary metabolites showing insecticidal activity. Within the pathway, ppzD converts L-proline into trans-4-hydroxy-L-proline as a major product, yielding a key precursor for peramine biosynthesis. PpzD is also able to convert L-proline into trans-3-hydroxy-L-proline. The single multifunctional NRPS ppzA is sufficient to produce peramine via condensation of 1-pyrroline-5-carboxylate and arginine, N-methylation of the alpha-amino group of arginine and reduction of the thioester and the cyclization to form an iminium ion resulting in release from the peptide synthetase. Deprotonation of this intermediate and oxidation of the pyrroline ring would give rise to peramine. In Epichloe species that produce only peramine, the peramine synthetase gene is not localized in a gene cluster, in contrast to Metarhizium species that contain additional pyrrolopyrazine biosynthesis genes. The 2-oxoglutarate-Fe(II) type oxidoreductase ppzC hydroxylates peramine to yield the newly identified compound 8-hydroxyperamine whereas ppzD converts L-proline into trans-4-hydroxy-L-proline, a precursor of peramine biosynthesis. The sequence is that of 2-oxoglutarate-Fe(II) type oxidoreductase ppzD from Metarhizium rileyi (strain RCEF 4871) (Nomuraea rileyi).